We begin with the raw amino-acid sequence, 523 residues long: Sucrose 6(F)-phosphate phosphorylase (523 aa).

Sucrose 6(F)-phosphate is bound by residues D58, H96, 221-223 (RLD), E264, 326-327 (HD), and K434. The active-site Nucleophile is D223. The active-site Proton donor/acceptor is E264.

This sequence belongs to the glycosyl hydrolase 13 family. Sucrose phosphorylase subfamily. Monomer.

It catalyses the reaction sucrose 6(F)-phosphate + phosphate = beta-D-fructose 6-phosphate + alpha-D-glucose 1-phosphate. Functionally, catalyzes the reversible phosphorolysis of sucrose 6(F)-phosphate into alpha-D-glucose 1-phosphate (Glc1P) and D-fructose 6-phosphate. May be involved in a new pathway for the degradation of sucrose, which could become phosphorylated on its fructose moiety during uptake via a PTS system. Shows strict specificity since it does not catalyze reactions with alternative substrates. This is Sucrose 6(F)-phosphate phosphorylase from Ilumatobacter coccineus (strain NBRC 103263 / KCTC 29153 / YM16-304).